The sequence spans 331 residues: Tetraacyldisaccharide 4'-kinase (331 aa).

59-66 provides a ligand contact to ATP; it reads FVGGTGKT.

It belongs to the LpxK family.

The enzyme catalyses a lipid A disaccharide + ATP = a lipid IVA + ADP + H(+). The protein operates within glycolipid biosynthesis; lipid IV(A) biosynthesis; lipid IV(A) from (3R)-3-hydroxytetradecanoyl-[acyl-carrier-protein] and UDP-N-acetyl-alpha-D-glucosamine: step 6/6. Its function is as follows. Transfers the gamma-phosphate of ATP to the 4'-position of a tetraacyldisaccharide 1-phosphate intermediate (termed DS-1-P) to form tetraacyldisaccharide 1,4'-bis-phosphate (lipid IVA). This is Tetraacyldisaccharide 4'-kinase from Alkalilimnicola ehrlichii (strain ATCC BAA-1101 / DSM 17681 / MLHE-1).